Reading from the N-terminus, the 227-residue chain is tRNA (guanine-N(7)-)-methyltransferase (227 aa).

The S-adenosyl-L-methionine site is built by E57, E82, D109, and D132. D132 is an active-site residue. Residues K136, D168, and 205 to 208 contribute to the substrate site; that span reads TKFE.

It belongs to the class I-like SAM-binding methyltransferase superfamily. TrmB family.

It catalyses the reaction guanosine(46) in tRNA + S-adenosyl-L-methionine = N(7)-methylguanosine(46) in tRNA + S-adenosyl-L-homocysteine. It participates in tRNA modification; N(7)-methylguanine-tRNA biosynthesis. Its function is as follows. Catalyzes the formation of N(7)-methylguanine at position 46 (m7G46) in tRNA. The sequence is that of tRNA (guanine-N(7)-)-methyltransferase from Leifsonia xyli subsp. xyli (strain CTCB07).